The primary structure comprises 317 residues: uncharacterized protein (317 aa).

This sequence to A.aeolicus AA11 and AA34.

This is an uncharacterized protein from Aquifex aeolicus (strain VF5).